Consider the following 97-residue polypeptide: Large ribosomal subunit protein uL23 (97 aa).

The protein belongs to the universal ribosomal protein uL23 family. As to quaternary structure, part of the 50S ribosomal subunit. Contacts protein L29, and trigger factor when it is bound to the ribosome.

One of the early assembly proteins it binds 23S rRNA. One of the proteins that surrounds the polypeptide exit tunnel on the outside of the ribosome. Forms the main docking site for trigger factor binding to the ribosome. In Anaeromyxobacter sp. (strain Fw109-5), this protein is Large ribosomal subunit protein uL23.